The following is an 836-amino-acid chain: Ethylene receptor 3 (836 aa).

The next 3 helical transmembrane spans lie at 137–157 (LIAA…AGLR), 166–186 (LVQF…TAFT), and 204–224 (LTAL…PQLL). Residues cysteine 176 and histidine 180 each coordinate Cu cation. The GAF domain maps to 269 to 413 (DRHTVLYTTL…VVAGQVAVAL (145 aa)). Residues 416–452 (ATLLEESRAMRDRLAEQNRELLQARRDALMANEARQA) adopt a coiled-coil conformation. Positions 457–691 (MSQGMRRPIH…LVLRFQLQSP (235 aa)) constitute a Histidine kinase domain. The 117-residue stretch at 718-834 (LLIDDDDDIN…LKDELARILQ (117 aa)) folds into the Response regulatory domain.

This sequence belongs to the ethylene receptor family. It depends on Cu cation as a cofactor.

The protein localises to the endoplasmic reticulum membrane. It catalyses the reaction ATP + protein L-histidine = ADP + protein N-phospho-L-histidine.. Ethylene receptor related to bacterial two-component regulators. Acts as a negative regulator of ethylene signaling. May delay the transition from the vegetative stage to the floral stage by up-regulating GI (GIGANTEA) and RCN1 and cause starch accumulation in stems by down-regulating the alpha-amylase AMY3D. The sequence is that of Ethylene receptor 3 from Oryza sativa subsp. indica (Rice).